A 129-amino-acid polypeptide reads, in one-letter code: Putative redox protein FMP46, mitochondrial (129 aa).

The N-terminal 21 residues, 1-21 (MSMFRTLQRQPRTISLFTHDL), are a transit peptide targeting the mitochondrion. Cysteine 94 is an active-site residue.

This sequence belongs to the FMP46 family.

It localises to the mitochondrion. Functionally, putative mitochondrial redox protein which could be involved in the reduction of small toxic molecules. The protein is Putative redox protein FMP46, mitochondrial (FMP46) of Candida glabrata (strain ATCC 2001 / BCRC 20586 / JCM 3761 / NBRC 0622 / NRRL Y-65 / CBS 138) (Yeast).